We begin with the raw amino-acid sequence, 493 residues long: Argininosuccinate lyase (493 aa).

It belongs to the lyase 1 family. Argininosuccinate lyase subfamily.

The protein resides in the cytoplasm. The catalysed reaction is 2-(N(omega)-L-arginino)succinate = fumarate + L-arginine. The protein operates within amino-acid biosynthesis; L-arginine biosynthesis; L-arginine from L-ornithine and carbamoyl phosphate: step 3/3. This is Argininosuccinate lyase from Methanospirillum hungatei JF-1 (strain ATCC 27890 / DSM 864 / NBRC 100397 / JF-1).